The primary structure comprises 192 residues: Peptidyl-tRNA hydrolase (192 aa).

Tyr-18 is a tRNA binding site. His-23 serves as the catalytic Proton acceptor. Positions 69, 71, and 117 each coordinate tRNA.

This sequence belongs to the PTH family. As to quaternary structure, monomer.

It is found in the cytoplasm. The catalysed reaction is an N-acyl-L-alpha-aminoacyl-tRNA + H2O = an N-acyl-L-amino acid + a tRNA + H(+). Hydrolyzes ribosome-free peptidyl-tRNAs (with 1 or more amino acids incorporated), which drop off the ribosome during protein synthesis, or as a result of ribosome stalling. Its function is as follows. Catalyzes the release of premature peptidyl moieties from peptidyl-tRNA molecules trapped in stalled 50S ribosomal subunits, and thus maintains levels of free tRNAs and 50S ribosomes. In Neisseria meningitidis serogroup C (strain 053442), this protein is Peptidyl-tRNA hydrolase.